The chain runs to 72 residues: Neuropeptide SIFamide (72 aa).

Residues 1–26 form the signal peptide; that stretch reads MALRFTLTLLLVTILVAAILLGSSEA. N-linked (GlcNAc...) asparagine glycosylation occurs at asparagine 34. A Phenylalanine amide modification is found at phenylalanine 38. Residues 42–72 constitute a propeptide that is removed on maturation; the sequence is NSLDYDSAKMSAVCEVAMEACPMWFPQNDSK.

Belongs to the FARP (FMRFamide related peptide) family. As to expression, strongly expressed in two pairs of neurons in the pars intercerebralis (at protein level).

It localises to the secreted. Ligand for the neuropeptide SIFamide receptor. Modulates sexual behavior by negatively regulating female receptivity to male courtship and by playing a role in male sex discrimination. Also involved in promoting sleep. This is Neuropeptide SIFamide from Drosophila melanogaster (Fruit fly).